The primary structure comprises 419 residues: UDP-N-acetylglucosamine 1-carboxyvinyltransferase (419 aa).

A phosphoenolpyruvate-binding site is contributed by 22–23 (KN). Arginine 91 serves as a coordination point for UDP-N-acetyl-alpha-D-glucosamine. Cysteine 115 serves as the catalytic Proton donor. Cysteine 115 is modified (2-(S-cysteinyl)pyruvic acid O-phosphothioketal). Residues 120-124 (RPVDL), 160-163 (KVSV), aspartate 305, and isoleucine 327 each bind UDP-N-acetyl-alpha-D-glucosamine.

Belongs to the EPSP synthase family. MurA subfamily.

Its subcellular location is the cytoplasm. The enzyme catalyses phosphoenolpyruvate + UDP-N-acetyl-alpha-D-glucosamine = UDP-N-acetyl-3-O-(1-carboxyvinyl)-alpha-D-glucosamine + phosphate. It functions in the pathway cell wall biogenesis; peptidoglycan biosynthesis. Functionally, cell wall formation. Adds enolpyruvyl to UDP-N-acetylglucosamine. This Klebsiella pneumoniae (strain 342) protein is UDP-N-acetylglucosamine 1-carboxyvinyltransferase.